Reading from the N-terminus, the 278-residue chain is MWSLWSLLLFEALLPVVVVSVQVLSKVGDSELLVAECPPGFQVREAIWRSLWPSEELLATFFRGSLETLYHSRFLGRVQLYDNLSLELGPLKPGDSGNFSVLMVDTGGQTWTQTLYLKVYDAVPKPEVQVFTAAAEETQPLNTCQVFLSCWAPNISDITYSWRWEGTVDFNGEVRSHFSNGQVLSVSLGLGDKDVAFTCIASNPVSWDMTTVTPWESCHHEAASGKASYKDVLLVVVPITLFLILAGLFGAWHHGLCSGKKKDACTDGVLPETENALV.

The first 20 residues, Met-1 to Ser-20, serve as a signal peptide directing secretion. The Extracellular segment spans residues Val-21–Asp-231. N-linked (GlcNAc...) asparagine glycans are attached at residues Asn-83 and Asn-154. The Ig-like C2-type domain maps to Pro-126–Thr-213. Cys-150 and Cys-199 are disulfide-bonded. Residues Val-232–Trp-252 form a helical membrane-spanning segment. At His-253–Val-278 the chain is on the cytoplasmic side.

The protein resides in the membrane. Functionally, may play a role in B-lineage commitment and/or modulation of signaling through the B-cell receptor. The sequence is that of SLAM family member 8 (Slamf8) from Mus musculus (Mouse).